A 302-amino-acid polypeptide reads, in one-letter code: MCAERLGQFMTLALVLATFDPARGTDATNPPEGPQDRSSQQKGRLSLQNTAEIQHCLVNAGDVGCGVFECFENNSCEIRGLHGICMTFLHNAGKFDAQGKSFIKDALKCKAHALRHRFGCISRKCPAIREMVSQLQRECYLKHDLCAAAQENTRVIVEMIHFKDLLLHEPYVDLVNLLLTCGEEVKEAITHSVQVQCEQNWGSLCSILSFCTSAIQKPPTAPPERQPQVDRTKLSRAHHGEAGHHLPEPSSRETGRGAKGERGSKSHPNAHARGRVGGLGAQGPSGSSEWEDEQSEYSDIRR.

The signal sequence occupies residues 1–24 (MCAERLGQFMTLALVLATFDPARG). The interval 23–44 (RGTDATNPPEGPQDRSSQQKGR) is disordered. Residue asparagine 73 is glycosylated (N-linked (GlcNAc...) asparagine). The segment at 217–302 (KPPTAPPERQ…EQSEYSDIRR (86 aa)) is disordered. Positions 227-264 (PQVDRTKLSRAHHGEAGHHLPEPSSRETGRGAKGERGS) are enriched in basic and acidic residues. Phosphoserine; by FAM20C is present on residues serine 250 and serine 251. The residue at position 254 (threonine 254) is a Phosphothreonine; by FAM20C.

The protein belongs to the stanniocalcin family. In terms of assembly, homodimer; disulfide-linked. In terms of tissue distribution, expressed in a variety of tissues including muscle, heart, pancreas, kidney, spleen, prostate, small intestine, colon and peripheral blood leukocytes.

Its subcellular location is the secreted. Has an anti-hypocalcemic action on calcium and phosphate homeostasis. This chain is Stanniocalcin-2 (STC2), found in Homo sapiens (Human).